We begin with the raw amino-acid sequence, 503 residues long: Cytochrome P450 monooxygenase ecdH (503 aa).

A helical transmembrane segment spans residues 8–24 (TTLLCGVISSTLLLLLL). N-linked (GlcNAc...) asparagine glycans are attached at residues N64, N324, and N413. C449 provides a ligand contact to heme.

It belongs to the cytochrome P450 family. It depends on heme as a cofactor.

It localises to the membrane. Its pathway is antifungal biosynthesis. Cytochrome P450 monooxygenase; part of the gene cluster that mediates the biosynthesis of echinocandin B, a fungal lipidated cyclic hexapeptide that acts as an antifungal agent. Linoleoyl-AMP, produced by the fatty-acyl-AMP ligase ecdI, is transferred to the initiation carrier domain (T0) of ecdA. The linoleoyl-S-phosphopantetheinyl-T0 is sequentially extended with L-ornithine, L-threonine, L-proline, L-homotyrosine, L-threonine, and 4R-methyl-L-proline to form the linear hexapeptide. Thereafter, the terminal condensation (C7) performs macrocyclization of the NRPS product and the cyclic scaffold is released from ecdA. All six of the amino acid residues are hydroxylated, including 4R,5R-dihydroxy-L-ornithine, 4R-hydroxyl-L-proline, 3S,4S-dihydroxy-L-homotyrosine, and 3S-hydroxyl-4S-methyl-L-prolin. In the pathway, all the hydroxylation reactions are proposed to occur following completion of the cyclic peptide, so the unhydroxylated precursor produced by ecdA will undergo six rounds of hydroxylation. Five hydroxylase genes (ecdG, ecdH, ecdK, htyE and htyF) are embedded within the echinocandin B (ecd) and L-homotyrosine (hty) clusters. This is Cytochrome P450 monooxygenase ecdH from Aspergillus rugulosus (Emericella rugulosa).